A 443-amino-acid polypeptide reads, in one-letter code: Ribosomal protein uS12 methylthiotransferase RimO (443 aa).

In terms of domain architecture, MTTase N-terminal spans 8–118 (PKVGFVSLGC…VVNAVHEVVP (111 aa)). Residues Cys17, Cys53, Cys82, Cys151, Cys155, and Cys158 each contribute to the [4Fe-4S] cluster site. The Radical SAM core domain maps to 137–375 (LTPRHYAYLK…MAHQQAISAA (239 aa)). The TRAM domain maps to 378–443 (QQRIGKEIEV…DEYDMWAEPI (66 aa)).

It belongs to the methylthiotransferase family. RimO subfamily. [4Fe-4S] cluster is required as a cofactor.

Its subcellular location is the cytoplasm. The catalysed reaction is L-aspartate(89)-[ribosomal protein uS12]-hydrogen + (sulfur carrier)-SH + AH2 + 2 S-adenosyl-L-methionine = 3-methylsulfanyl-L-aspartate(89)-[ribosomal protein uS12]-hydrogen + (sulfur carrier)-H + 5'-deoxyadenosine + L-methionine + A + S-adenosyl-L-homocysteine + 2 H(+). In terms of biological role, catalyzes the methylthiolation of an aspartic acid residue of ribosomal protein uS12. The chain is Ribosomal protein uS12 methylthiotransferase RimO from Pseudomonas entomophila (strain L48).